Reading from the N-terminus, the 232-residue chain is Uridylate kinase (232 aa).

13 to 14 lines the ATP pocket; the sequence is GS. Glycine 52 serves as a coordination point for UMP. ATP is bound by residues glycine 53 and arginine 57. UMP is bound by residues aspartate 74 and 122–128; that span reads LQPGQST. ATP contacts are provided by threonine 147, tyrosine 153, and aspartate 156.

It belongs to the UMP kinase family. As to quaternary structure, homohexamer.

The protein localises to the cytoplasm. The enzyme catalyses UMP + ATP = UDP + ADP. The protein operates within pyrimidine metabolism; CTP biosynthesis via de novo pathway; UDP from UMP (UMPK route): step 1/1. Its activity is regulated as follows. Inhibited by UTP. Its function is as follows. Catalyzes the reversible phosphorylation of UMP to UDP. This is Uridylate kinase from Thermofilum pendens (strain DSM 2475 / Hrk 5).